The chain runs to 236 residues: Probable metal transport system ATP-binding protein TC_0697 (236 aa).

The ABC transporter domain occupies 5 to 236; the sequence is LILENVSFRY…FCCNTFGKCS (232 aa). 39-46 lines the ATP pocket; the sequence is GPNGGGKT.

It belongs to the ABC transporter superfamily.

Its subcellular location is the cell inner membrane. In terms of biological role, part of an ATP-driven transport system TC_0696/TC_0697/TC_0698 for a metal. Probably responsible for energy coupling to the transport system. The protein is Probable metal transport system ATP-binding protein TC_0697 of Chlamydia muridarum (strain MoPn / Nigg).